Here is a 277-residue protein sequence, read N- to C-terminus: MESQSCKLTIKDLMSAGAHFGHQTRRWNPKMKLYIFEEKNGLYIINLAKTLQQLRNALPHIRKVIQDNKTVLFVGTKKQAKCVIREAAIEAGEFFIAERWLGGMLTNMTTIRNSIKTLDKIEKDLSRNQAYLTKKEAALLAKRHQKLLRNLEGIRYMKKAPGLLVVVDPSYEKIAVAEAKKLGIPVLALVDTNCDPTPIDHVIPCNDDSLKSIRLIINVIKENIIEAKHKLGIEIVSPVKSLEVPDLSAFESSQDDESDEENREEDLLAKKFDGEAN.

The tract at residues 247 to 277 (LSAFESSQDDESDEENREEDLLAKKFDGEAN) is disordered. Residues 253 to 264 (SQDDESDEENRE) are compositionally biased toward acidic residues. Residues 265-277 (EDLLAKKFDGEAN) show a composition bias toward basic and acidic residues.

This sequence belongs to the universal ribosomal protein uS2 family.

The chain is Small ribosomal subunit protein uS2 (rpsB) from Chlamydia pneumoniae (Chlamydophila pneumoniae).